The primary structure comprises 559 residues: Glutamine--tRNA ligase (559 aa).

The 'HIGH' region signature appears at 36–46; that stretch reads PEPNGYLHLGH. ATP-binding positions include 37 to 39 and 43 to 49; these read EPN and HLGHAKS. The L-glutamine site is built by Asp-69 and Tyr-214. ATP is bound by residues Thr-233, 263 to 264, and 271 to 273; these read RL and LSK. Residues 270–274 carry the 'KMSKS' region motif; the sequence is LLSKR.

It belongs to the class-I aminoacyl-tRNA synthetase family. As to quaternary structure, monomer.

It localises to the cytoplasm. The enzyme catalyses tRNA(Gln) + L-glutamine + ATP = L-glutaminyl-tRNA(Gln) + AMP + diphosphate. This Nitrobacter winogradskyi (strain ATCC 25391 / DSM 10237 / CIP 104748 / NCIMB 11846 / Nb-255) protein is Glutamine--tRNA ligase.